The following is a 145-amino-acid chain: Large ribosomal subunit protein uL13 (145 aa).

It belongs to the universal ribosomal protein uL13 family. In terms of assembly, part of the 50S ribosomal subunit. Binds to Obg (AC P20964).

In terms of biological role, this protein is one of the early assembly proteins of the 50S ribosomal subunit, although it is not seen to bind rRNA by itself. It is important during the early stages of 50S assembly. This is Large ribosomal subunit protein uL13 from Bacillus subtilis (strain 168).